The sequence spans 79 residues: DNA-directed RNA polymerase subunit omega (79 aa).

It belongs to the RNA polymerase subunit omega family. In cyanobacteria the RNAP catalytic core is composed of 2 alpha, 1 beta, 1 beta', 1 gamma and 1 omega subunit. When a sigma factor is associated with the core the holoenzyme is formed, which can initiate transcription.

The catalysed reaction is RNA(n) + a ribonucleoside 5'-triphosphate = RNA(n+1) + diphosphate. In terms of biological role, promotes RNA polymerase assembly. Latches the N- and C-terminal regions of the beta' subunit thereby facilitating its interaction with the beta and alpha subunits. The polypeptide is DNA-directed RNA polymerase subunit omega (Synechococcus sp. (strain JA-2-3B'a(2-13)) (Cyanobacteria bacterium Yellowstone B-Prime)).